Consider the following 144-residue polypeptide: Transcription antitermination protein NusB (144 aa).

Belongs to the NusB family.

In terms of biological role, involved in transcription antitermination. Required for transcription of ribosomal RNA (rRNA) genes. Binds specifically to the boxA antiterminator sequence of the ribosomal RNA (rrn) operons. This Paraburkholderia phytofirmans (strain DSM 17436 / LMG 22146 / PsJN) (Burkholderia phytofirmans) protein is Transcription antitermination protein NusB.